Consider the following 387-residue polypeptide: Succinate--CoA ligase [ADP-forming] subunit beta (387 aa).

An ATP-grasp domain is found at 9–236 (KELFAKHNVP…RAATDPLELK (228 aa)). Residues lysine 45, 52–54 (GRG), serine 94, and glutamate 99 each bind ATP. Mg(2+) is bound by residues asparagine 191 and aspartate 205. Substrate-binding positions include asparagine 256 and 318–320 (GIT).

It belongs to the succinate/malate CoA ligase beta subunit family. In terms of assembly, heterotetramer of two alpha and two beta subunits. Mg(2+) serves as cofactor.

The catalysed reaction is succinate + ATP + CoA = succinyl-CoA + ADP + phosphate. The enzyme catalyses GTP + succinate + CoA = succinyl-CoA + GDP + phosphate. It participates in carbohydrate metabolism; tricarboxylic acid cycle; succinate from succinyl-CoA (ligase route): step 1/1. Functionally, succinyl-CoA synthetase functions in the citric acid cycle (TCA), coupling the hydrolysis of succinyl-CoA to the synthesis of either ATP or GTP and thus represents the only step of substrate-level phosphorylation in the TCA. The beta subunit provides nucleotide specificity of the enzyme and binds the substrate succinate, while the binding sites for coenzyme A and phosphate are found in the alpha subunit. The sequence is that of Succinate--CoA ligase [ADP-forming] subunit beta from Mycobacterium marinum (strain ATCC BAA-535 / M).